The primary structure comprises 106 residues: Iron-sulfur cluster assembly protein CyaY (106 aa).

Belongs to the frataxin family.

In terms of biological role, involved in iron-sulfur (Fe-S) cluster assembly. May act as a regulator of Fe-S biogenesis. The protein is Iron-sulfur cluster assembly protein CyaY of Salmonella schwarzengrund (strain CVM19633).